The sequence spans 156 residues: Small ribosomal subunit protein uS7 (156 aa).

The protein belongs to the universal ribosomal protein uS7 family. In terms of assembly, part of the 30S ribosomal subunit. Contacts proteins S9 and S11.

In terms of biological role, one of the primary rRNA binding proteins, it binds directly to 16S rRNA where it nucleates assembly of the head domain of the 30S subunit. Is located at the subunit interface close to the decoding center, probably blocks exit of the E-site tRNA. This chain is Small ribosomal subunit protein uS7, found in Mycobacterium avium (strain 104).